The primary structure comprises 737 residues: Protein kinase C epsilon type (737 aa).

The C2 domain maps to 1–117 (MVVFNGLLKI…NGSRHFEDWI (117 aa)). Ser-62 bears the Phosphoserine mark. A Phorbol-ester/DAG-type 1 zinc finger spans residues 169–220 (GHKFMATYLRQPTYCSHCRDFIWGVIGKQGYQCQVCTCVVHKRCHELIITKC). The Interaction with actin signature appears at 223–228 (LKKQET). Thr-228 carries the post-translational modification Phosphothreonine. Ser-234 is modified (phosphoserine). The Phorbol-ester/DAG-type 2 zinc-finger motif lies at 242–292 (PHKFGIHNYKVPTFCDHCGSLLWGLLRQGLQCKVCKMNVHRRCETNVAPNC). Thr-309 is subject to Phosphothreonine. The interval 310–356 (PDKITNSGQRRKKLAAGAESPQPASGNSPSEDDRSKSAPTSPCDQEL) is disordered. Ser-316, Ser-329, Ser-337, and Ser-346 each carry phosphoserine. Thr-349 carries the post-translational modification Phosphothreonine. Phosphoserine; by MAPK11 and MAPK14 is present on Ser-350. Phosphoserine is present on residues Ser-368 and Ser-388. The segment at 369-398 (FDNRGEEHRASSSTDGQLASPGENGEVRQG) is disordered. In terms of domain architecture, Protein kinase spans 408–668 (FNFIKVLGKG…EDAIKQHPFF (261 aa)). Residues 414–422 (LGKGSFGKV) and Lys-437 contribute to the ATP site. Asp-532 (proton acceptor) is an active-site residue. At Thr-566 the chain carries Phosphothreonine; by PDPK1. The AGC-kinase C-terminal domain occupies 669–737 (KEIDWVLLEQ…FSYFGEDLMP (69 aa)). Phosphothreonine occurs at positions 703 and 710. Ser-729 bears the Phosphoserine mark.

It belongs to the protein kinase superfamily. AGC Ser/Thr protein kinase family. PKC subfamily. As to quaternary structure, forms a ternary complex with TRIM63 and RACK1/GN2BL1. Can form a complex with PDLIM5 and N-type calcium channel. Interacts with COPB1. Interacts with DGKQ. Interacts with STAT3. Interacts with YWHAB. Interacts with HSP90AB1; promotes functional activation in a heat shock-dependent manner. Interacts (via phorbol-ester/DAG-type 2 domain) with PRPH and VIM. Interacts with NLRP5/MATER. Post-translationally, phosphorylation on Thr-566 by PDPK1 triggers autophosphorylation on Ser-729. Phosphorylation in the hinge domain at Ser-350 by MAPK11 or MAPK14, Ser-346 by GSK3B and Ser-368 by autophosphorylation is required for interaction with YWHAB. In response to growth factors, phosphorylated at Thr-703 and Ser-729 by the mTORC2 complex, promoting autophosphorylation and activation of PRKCE.

The protein localises to the cytoplasm. It is found in the cytoskeleton. Its subcellular location is the cell membrane. It localises to the perinuclear region. The protein resides in the nucleus. The enzyme catalyses L-seryl-[protein] + ATP = O-phospho-L-seryl-[protein] + ADP + H(+). The catalysed reaction is L-threonyl-[protein] + ATP = O-phospho-L-threonyl-[protein] + ADP + H(+). With respect to regulation, novel PKCs (PRKCD, PRKCE, PRKCH and PRKCQ) are calcium-insensitive, but activated by diacylglycerol (DAG) and phosphatidylserine. Three specific sites; Thr-566 (activation loop of the kinase domain), Thr-710 (turn motif) and Ser-729 (hydrophobic region), need to be phosphorylated for its full activation. Calcium-independent, phospholipid- and diacylglycerol (DAG)-dependent serine/threonine-protein kinase that plays essential roles in the regulation of multiple cellular processes linked to cytoskeletal proteins, such as cell adhesion, motility, migration and cell cycle, functions in neuron growth and ion channel regulation, and is involved in immune response, cancer cell invasion and regulation of apoptosis. Mediates cell adhesion to the extracellular matrix via integrin-dependent signaling, by mediating angiotensin-2-induced activation of integrin beta-1 (ITGB1) in cardiac fibroblasts. Phosphorylates MARCKS, which phosphorylates and activates PTK2/FAK, leading to the spread of cardiomyocytes. Involved in the control of the directional transport of ITGB1 in mesenchymal cells by phosphorylating vimentin (VIM), an intermediate filament (IF) protein. In epithelial cells, associates with and phosphorylates keratin-8 (KRT8), which induces targeting of desmoplakin at desmosomes and regulates cell-cell contact. Phosphorylates IQGAP1, which binds to CDC42, mediating epithelial cell-cell detachment prior to migration. During cytokinesis, forms a complex with YWHAB, which is crucial for daughter cell separation, and facilitates abscission by a mechanism which may implicate the regulation of RHOA. In cardiac myocytes, regulates myofilament function and excitation coupling at the Z-lines, where it is indirectly associated with F-actin via interaction with COPB1. During endothelin-induced cardiomyocyte hypertrophy, mediates activation of PTK2/FAK, which is critical for cardiomyocyte survival and regulation of sarcomere length. Plays a role in the pathogenesis of dilated cardiomyopathy via persistent phosphorylation of troponin I (TNNI3). Involved in nerve growth factor (NFG)-induced neurite outgrowth and neuron morphological change independently of its kinase activity, by inhibition of RHOA pathway, activation of CDC42 and cytoskeletal rearrangement. May be involved in presynaptic facilitation by mediating phorbol ester-induced synaptic potentiation. Phosphorylates gamma-aminobutyric acid receptor subunit gamma-2 (GABRG2), which reduces the response of GABA receptors to ethanol and benzodiazepines and may mediate acute tolerance to the intoxicating effects of ethanol. Upon PMA treatment, phosphorylates the capsaicin- and heat-activated cation channel TRPV1, which is required for bradykinin-induced sensitization of the heat response in nociceptive neurons. Is able to form a complex with PDLIM5 and N-type calcium channel, and may enhance channel activities and potentiates fast synaptic transmission by phosphorylating the pore-forming alpha subunit CACNA1B (CaV2.2). Downstream of TLR4, plays an important role in the lipopolysaccharide (LPS)-induced immune response by phosphorylating and activating TICAM2/TRAM, which in turn activates the transcription factor IRF3 and subsequent cytokines production. In differentiating erythroid progenitors, is regulated by EPO and controls the protection against the TNFSF10/TRAIL-mediated apoptosis, via BCL2. May be involved in the regulation of the insulin-induced phosphorylation and activation of AKT1. Phosphorylates NLRP5/MATER and may thereby modulate AKT pathway activation in cumulus cells. Phosphorylates and activates LRRK1, which phosphorylates RAB proteins involved in intracellular trafficking. This Rattus norvegicus (Rat) protein is Protein kinase C epsilon type (Prkce).